Here is a 404-residue protein sequence, read N- to C-terminus: S-adenosylmethionine synthase (404 aa).

His-17 lines the ATP pocket. Asp-19 lines the Mg(2+) pocket. Glu-45 contacts K(+). L-methionine-binding residues include Glu-58 and Gln-101. Positions 101–111 are flexible loop; it reads QSPDINRGVDR. Residues 172–174, 245–246, Asp-254, 260–261, Ala-277, and Lys-281 each bind ATP; these read DAK, RF, and RK. Asp-254 contributes to the L-methionine binding site. Lys-285 contributes to the L-methionine binding site.

It belongs to the AdoMet synthase family. As to quaternary structure, homotetramer; dimer of dimers. Requires Mg(2+) as cofactor. It depends on K(+) as a cofactor.

It is found in the cytoplasm. It catalyses the reaction L-methionine + ATP + H2O = S-adenosyl-L-methionine + phosphate + diphosphate. It functions in the pathway amino-acid biosynthesis; S-adenosyl-L-methionine biosynthesis; S-adenosyl-L-methionine from L-methionine: step 1/1. Its function is as follows. Catalyzes the formation of S-adenosylmethionine (AdoMet) from methionine and ATP. The overall synthetic reaction is composed of two sequential steps, AdoMet formation and the subsequent tripolyphosphate hydrolysis which occurs prior to release of AdoMet from the enzyme. This is S-adenosylmethionine synthase from Pelodictyon phaeoclathratiforme (strain DSM 5477 / BU-1).